The sequence spans 175 residues: Orotate phosphoribosyltransferase (175 aa).

5-phospho-alpha-D-ribose 1-diphosphate is bound by residues Arg-89, Lys-90, Lys-93, and 115–123 (EDIATTGQS). Orotate contacts are provided by Thr-119 and Arg-147.

Belongs to the purine/pyrimidine phosphoribosyltransferase family. PyrE subfamily. In terms of assembly, homodimer. The cofactor is Mg(2+).

It catalyses the reaction orotidine 5'-phosphate + diphosphate = orotate + 5-phospho-alpha-D-ribose 1-diphosphate. The protein operates within pyrimidine metabolism; UMP biosynthesis via de novo pathway; UMP from orotate: step 1/2. In terms of biological role, catalyzes the transfer of a ribosyl phosphate group from 5-phosphoribose 1-diphosphate to orotate, leading to the formation of orotidine monophosphate (OMP). The protein is Orotate phosphoribosyltransferase of Halobacterium salinarum (strain ATCC 700922 / JCM 11081 / NRC-1) (Halobacterium halobium).